The primary structure comprises 331 residues: MRHTVIFASAFATLVTASAFAADLPGKGITVQPIQSTISEETFQTLLVSRALEKLGYTVNKPSEVDYNVGYTSIASGDATFTAVNWQPLHDDMYAAAGGDNKFYREGVFVSGAAQGYLIDKKTAEQYNITNIAQLKDPKIAKIFDTNGDGKADMMGCSPGWGCEAVINHQNKAFDLQKTVEVSHGNYAAMMADTITRFKEGKPVLYYTWTPYWVSDVMKPGKDVVWLQVPFSSLPGEQKNIDTKLPNGANYGFPVNTMHIVANKAWAEKNPAAAKLFAIMKLPLADINAQNAMMHAGKSSEADVQGHVDGWINAHQQQFDGWVKEALAAQK.

The first 21 residues, M1–A21, serve as a signal peptide directing secretion. Residues W86, H90, and W161–C163 contribute to the substrate site. A disulfide bond links C157 and C163.

As to quaternary structure, the complex is composed of two ATP-binding proteins (ProV), two transmembrane proteins (ProW) and a solute-binding protein (ProX).

Its subcellular location is the periplasm. Part of the ProU ABC transporter complex involved in glycine betaine and proline betaine uptake. Binds glycine betaine and proline betaine with high affinity. The protein is Glycine betaine/proline betaine-binding periplasmic protein (proX) of Salmonella typhimurium (strain LT2 / SGSC1412 / ATCC 700720).